The chain runs to 1393 residues: MFGEGSRDNATLSKEGLFDKLEIGIASDITIRDKWSCGEIKKPETINYRTFKPEKGGLFCEKIFGPTKDWECCCGKYKKIKHKGIVCDRCGVEVTLSKVRRERMAHIELAVPIVHIWFFKTTPSRIGNVLGMTASDLERIIYYEEYVVIDPGKTDLNKKQLLNDAQYREVVEKWGKDAFVAKMGGEAIYDLLKSEDLQSLLKELKDRLRKTKSQQARMKLAKRLKIIEGFVSSSNHPEWMVLKSVPVVPPDLRPLVPLDGGRFATSDLNDLYRRVINRNNRLKAILRLKTPEVIVRNEKRMLQEAVDALFDNGRHGHPVMGAGNRPLKSLSEMLKGKNGRFRQNLLGKRVDYSGRSVIIVGPELKFNQCGLPKEMALELFEPFIIKRLKDQGSVYTIRSAKKMIQRGAPEVWDVLEEIIKGHPVLLNRAPTLHRLGIQAFEPVLIEGKAIRVHPLVCAAFNADFDGDQMAVHVPLSIEAQLEAKVLMMAPDNIFLPSSGKPVATPSKDMTLGIYYLMADPTYFPEDHGGKIKIFRDVTEVLRALYTGGFLDERINNRCDETGRGIHIHEKIKVRIDGQIIETTPGRVLFNRIVPKELGFQNYSMPSKRISELILQCYKKVGLEATVRFLDDLKDLGFIQATKAAISMGLKDVRIPEIKSEILKEAYDKVAVVKKQYDDGIITDGERHSKTISIWTEVSELLSDALYVEISKQAKSKHNPLFLMIDSGARGNKSQLKQLGALRGLMAKPNGAIIESPITSNFREGLTVLEYSISSHGARKGLADTALKTADSGYLTRRLVDVAQDVIITEKDCGTLNHIEISAIRQGSEELLPLKDRIYGRTVSEDIYQPGDKSKLLAKNGDVVTSAQAELIDDAGIESIKIRSTLTCESRRGVCAKCYGLNLANGRLIGLGEAVGIIAAQSIGEPGTQLTMRTFHLGGIAATSSTPEIVTDNDGILVYMDLRVVVGQDGNHLVLNKKGAIHVVRDEGRSLEEYKKLLSTKSIESLETYPVELGVKILVGDGEKVSSGQRIAEVELHNIPIICDKPGFVKYEDLVEGISTEKVVNKNTGLVELIVKQHRGELHPQIAIYSDAGLTELVGTYAIPSGAIISVEENQKVDPGMLLARLPRGAIKTKDITGGLPRVAELVEARKPEDAADIAKIDGVVDFKGIQKNKRILVVRDEITGMEEEHLIPLTKHLIVQRGDNVMKGQQLTDGLVVPHEILEICGVRELQKYLVNEVQEVYRLQGVDINDKHIEIIVRQMLQKVRITDPGDTTLLFGEEVNKKEFYEENRRTEEDGGKPAQAVPVLLGITKASLGTESFISAASFQDTTRVLTDAACSSKTDYLLGFKENVIMGHMIPGGTGFDTHKRIKQYLEKEQEDLVFDFESESECAC.

Zn(2+) contacts are provided by cysteine 72, cysteine 74, cysteine 87, and cysteine 90. Residues aspartate 463, aspartate 465, and aspartate 467 each coordinate Mg(2+). The Zn(2+) site is built by cysteine 812, cysteine 887, cysteine 894, and cysteine 897.

It belongs to the RNA polymerase beta' chain family. As to quaternary structure, the RNAP catalytic core consists of 2 alpha, 1 beta, 1 beta' and 1 omega subunit. When a sigma factor is associated with the core the holoenzyme is formed, which can initiate transcription. Mg(2+) serves as cofactor. The cofactor is Zn(2+).

It carries out the reaction RNA(n) + a ribonucleoside 5'-triphosphate = RNA(n+1) + diphosphate. In terms of biological role, DNA-dependent RNA polymerase catalyzes the transcription of DNA into RNA using the four ribonucleoside triphosphates as substrates. The chain is DNA-directed RNA polymerase subunit beta' from Chlamydia caviae (strain ATCC VR-813 / DSM 19441 / 03DC25 / GPIC) (Chlamydophila caviae).